The following is a 487-amino-acid chain: Sodium-coupled neutral amino acid symporter 1 (487 aa).

The Cytoplasmic segment spans residues 1-74 (MMHFKSGLEL…EYIPGTTSLG (74 aa)). Serine 6 bears the Phosphoserine mark. Threonine 11 is modified (phosphothreonine). Phosphoserine occurs at positions 25, 28, 49, and 52. Threonine 54 bears the Phosphothreonine mark. Position 56 is a phosphoserine (serine 56). Residues 75-97 (MSVFNLSNAIMGSGILGLAFALA) form a helical membrane-spanning segment. The Extracellular segment spans residues 98–112 (NTGILLFLVLLTSVT). The helical transmembrane segment at 113 to 133 (LLSIYSINLLLICSKETGCMV) threads the bilayer. Residues 134–147 (YEKLGEQVFGTTGK) are Cytoplasmic-facing. The chain crosses the membrane as a helical span at residues 148-168 (FVIFGATSLQNTGAMLSYLFI). Topologically, residues 169–188 (VKNELPSAIKFLMGKEETFS) are extracellular. Residues 189–211 (AWYVDGRVLVVIVTFGIILPLCL) traverse the membrane as a helical segment. Residues 212 to 216 (LKNLG) lie on the Cytoplasmic side of the membrane. A helical transmembrane segment spans residues 217-237 (YLGYTSGFSLSCMVFFLIVVI). The Extracellular portion of the chain corresponds to 238–275 (YKKFQIPCIVPELNSTISANSTNADTCTPKYVTLNSKT). A disulfide bond links cysteine 245 and cysteine 264. Asparagine 251 and asparagine 257 each carry an N-linked (GlcNAc...) asparagine glycan. The chain crosses the membrane as a helical span at residues 276-296 (VYALPTIAFAFVCHPSVLPIY). The Cytoplasmic portion of the chain corresponds to 297-312 (SELKDRSQKKMQMVSN). The helical transmembrane segment at 313–333 (ISFFAMFVMYFLTAIFGYLTF) threads the bilayer. Topologically, residues 334–350 (YDNVQSDLLHKYQGKDD) are extracellular. The helical transmembrane segment at 351–371 (ILILTVRLAVIVAVILTVPVL) threads the bilayer. The Cytoplasmic portion of the chain corresponds to 372-393 (FFTVRSSLFELAKKTKFNLCRH). Residues 394–414 (TVVTCILLVVINLLVISIPSM) traverse the membrane as a helical segment. At 415 to 416 (KD) the chain is on the extracellular side. The chain crosses the membrane as a helical span at residues 417–437 (IFGVVGVTSANMLIFILPSSL). Residues 438-452 (YLKITDQDGDKGTQR) lie on the Cytoplasmic side of the membrane. The chain crosses the membrane as a helical span at residues 453–473 (IWAALFLGLGVLFSLVSIPLV). The Extracellular segment spans residues 474–487 (IYDWACSSSSDEGH).

This sequence belongs to the amino acid/polyamine transporter 2 family. In terms of processing, N-glycosylation plays an important role in the L-glutamine transport.

It localises to the cell membrane. The enzyme catalyses L-glutamine(in) + Na(+)(in) = L-glutamine(out) + Na(+)(out). It catalyses the reaction L-alanine(in) + Na(+)(in) = L-alanine(out) + Na(+)(out). The catalysed reaction is L-asparagine(in) + Na(+)(in) = L-asparagine(out) + Na(+)(out). It carries out the reaction L-histidine(in) + Na(+)(in) = L-histidine(out) + Na(+)(out). The enzyme catalyses L-serine(in) + Na(+)(in) = L-serine(out) + Na(+)(out). It catalyses the reaction L-cysteine(in) + Na(+)(in) = L-cysteine(out) + Na(+)(out). The catalysed reaction is L-methionine(in) + Na(+)(in) = L-methionine(out) + Na(+)(out). It carries out the reaction glycine(in) + Na(+)(in) = glycine(out) + Na(+)(out). The enzyme catalyses L-threonine(in) + Na(+)(in) = L-threonine(out) + Na(+)(out). It catalyses the reaction L-proline(in) + Na(+)(in) = L-proline(out) + Na(+)(out). With respect to regulation, inhibited by alpha-(methylamino)isobutyric acid (MeAIB). Inhibited by lithium, potassium, choline ions, N-methylglucamine. The pH dependence has an allosteric effect on the transport. Functionally, symporter that cotransports short-chain neutral amino acids and sodium ions from the extraccellular to the intracellular side of the cell membrane. The transport is elctrogenic, pH dependent and driven by the Na(+) electrochemical gradient. Participates in the astroglia-derived glutamine transport into GABAergic interneurons for neurotransmitter GABA de novo synthesis. May also contributes to amino acid transport in placental trophoblast. Regulates synaptic plasticity. This is Sodium-coupled neutral amino acid symporter 1 from Pongo abelii (Sumatran orangutan).